A 342-amino-acid chain; its full sequence is MQNEYSQFEQRKRDHIELALMPANQSSELNPFDHFSLVHEALPDLDFKDISIQSIRLKKKVEKPFIISSMTAGHSNALEINYRLMEACSKTKWAMGVGSQRRELTDKQAAFEWAPLRRDFPMVSLFSNLGIAQLIDTPISAIQRLIDTLQAEALIVHCNPLQECIQPEGTTNFQGCWTALEALVKKIASPVIIKETGCGFSKNTLLRLNNIGVAAVDVSGVGGTHWGRIEGHRANKDPIRHRTADTFRNWGIDTLQSIRNAISLNPSFEIWGSGGVRNGLDAAKLFALGATTVGFAKPMLEAALDSTGQVLTQMNTIEYELKTAMFCTGSRVLDDLKEKACP.

11–12 (RK) lines the substrate pocket. FMN contacts are provided by residues Ser-68, 69–71 (SMT), Ser-99, and Asn-128. 99-101 (SQR) provides a ligand contact to substrate. Residue Gln-162 coordinates substrate. Glu-163 lines the Mg(2+) pocket. FMN contacts are provided by residues Lys-194, Ser-219, Thr-224, 275 to 277 (GVR), and 296 to 297 (AK).

It belongs to the IPP isomerase type 2 family. Homooctamer. Dimer of tetramers. The cofactor is FMN. NADPH is required as a cofactor. Mg(2+) serves as cofactor.

It is found in the cytoplasm. It carries out the reaction isopentenyl diphosphate = dimethylallyl diphosphate. Its function is as follows. Involved in the biosynthesis of isoprenoids. Catalyzes the 1,3-allylic rearrangement of the homoallylic substrate isopentenyl (IPP) to its allylic isomer, dimethylallyl diphosphate (DMAPP). This is Isopentenyl-diphosphate delta-isomerase from Legionella pneumophila (strain Corby).